A 146-amino-acid chain; its full sequence is Hemoglobin subunit beta-1 (146 aa).

A Globin domain is found at 2–146; it reads HWTAEEKHLL…VAHALARRYH (145 aa). 2 residues coordinate heme b: His-63 and His-92.

The protein belongs to the globin family. As to quaternary structure, there are three forms of hemoglobin in Sphenodon: A, A' and D. Hb A is a tetramer of two alpha-A and two beta-1, Hb A' is a tetramer of two alpha-a and two beta-2, Hb D is a tetramer of two alpha-D and two beta-2.

In terms of biological role, involved in oxygen transport from the lung to the various peripheral tissues. The polypeptide is Hemoglobin subunit beta-1 (HBB1) (Sphenodon punctatus (Tuatara)).